The primary structure comprises 36 residues: Dermonecrotic toxin LgSicTox-beta-LOXN2 (36 aa).

Belongs to the arthropod phospholipase D family. Class II subfamily. The cofactor is Mg(2+). Post-translationally, contains 2 disulfide bonds. Expressed by the venom gland.

It is found in the secreted. The enzyme catalyses an N-(acyl)-sphingosylphosphocholine = an N-(acyl)-sphingosyl-1,3-cyclic phosphate + choline. The catalysed reaction is an N-(acyl)-sphingosylphosphoethanolamine = an N-(acyl)-sphingosyl-1,3-cyclic phosphate + ethanolamine. It carries out the reaction a 1-acyl-sn-glycero-3-phosphocholine = a 1-acyl-sn-glycero-2,3-cyclic phosphate + choline. It catalyses the reaction a 1-acyl-sn-glycero-3-phosphoethanolamine = a 1-acyl-sn-glycero-2,3-cyclic phosphate + ethanolamine. In terms of biological role, dermonecrotic toxins cleave the phosphodiester linkage between the phosphate and headgroup of certain phospholipids (sphingolipid and lysolipid substrates), forming an alcohol (often choline) and a cyclic phosphate. This toxin acts on sphingomyelin (SM). It may also act on ceramide phosphoethanolamine (CPE), lysophosphatidylcholine (LPC) and lysophosphatidylethanolamine (LPE), but not on lysophosphatidylserine (LPS), and lysophosphatidylglycerol (LPG). It acts by transphosphatidylation, releasing exclusively cyclic phosphate products as second products. Induces dermonecrosis, hemolysis, increased vascular permeability, edema, inflammatory response, and platelet aggregation. The polypeptide is Dermonecrotic toxin LgSicTox-beta-LOXN2 (Loxosceles gaucho (Spider)).